We begin with the raw amino-acid sequence, 367 residues long: Glycolate oxidase 3 (367 aa).

An FMN hydroxy acid dehydrogenase domain is found at 1 to 360; that stretch reads MELITNVSEY…TRNHVITDSD (360 aa). Glyoxylate is bound at residue Tyr-25. Residues 78–80, Ser-107, 128–130, and Thr-156 each bind FMN; these read PSA and QLY. Residue Tyr-130 coordinates glyoxylate. Arg-165 is a glyoxylate binding site. Residues Lys-231 and Ser-253 each coordinate FMN. His-255 and Arg-258 together coordinate glyoxylate. His-255 serves as the catalytic Proton acceptor. Residues 286 to 290 and 309 to 310 contribute to the FMN site; these read DGGVR and GR. The short motif at 365-367 is the Microbody targeting signal element; it reads SRL.

It belongs to the FMN-dependent alpha-hydroxy acid dehydrogenase family. In terms of assembly, homotetramer. Requires FMN as cofactor.

It is found in the peroxisome. It carries out the reaction glycolate + O2 = glyoxylate + H2O2. It participates in photosynthesis; photorespiration; glycine from 2-phosphoglycolate: step 2/3. Its function is as follows. Catalyzes the oxidation of glycolate to glyoxylate, with a reduction of O2 to H2O2. Is a key enzyme in photorespiration in green plants. The protein is Glycolate oxidase 3 (GLO3) of Oryza sativa subsp. indica (Rice).